Consider the following 359-residue polypeptide: 3-dehydroquinate synthase (359 aa).

NAD(+) is bound by residues 71–76 (DGEQYK), 105–109 (GVIGD), 129–130 (TT), Lys-142, Lys-151, and 169–172 (CLST). 3 residues coordinate Zn(2+): Glu-184, His-247, and His-264.

It belongs to the sugar phosphate cyclases superfamily. Dehydroquinate synthase family. Co(2+) serves as cofactor. It depends on Zn(2+) as a cofactor. NAD(+) is required as a cofactor.

The protein localises to the cytoplasm. The catalysed reaction is 7-phospho-2-dehydro-3-deoxy-D-arabino-heptonate = 3-dehydroquinate + phosphate. It participates in metabolic intermediate biosynthesis; chorismate biosynthesis; chorismate from D-erythrose 4-phosphate and phosphoenolpyruvate: step 2/7. Catalyzes the conversion of 3-deoxy-D-arabino-heptulosonate 7-phosphate (DAHP) to dehydroquinate (DHQ). This is 3-dehydroquinate synthase from Shewanella piezotolerans (strain WP3 / JCM 13877).